Reading from the N-terminus, the 471-residue chain is Variant surface glycoprotein ILTAT 1.1BC (471 aa).

The N-terminal stretch at 1-21 is a signal peptide; that stretch reads MVKAIASLMLLHIWAIEEIKA. Asparagine 130 carries an N-linked (GlcNAc...) asparagine glycan. The segment covering 158–168 has biased composition (polar residues); it reads TVSKTTECNTE. Disordered regions lie at residues 158–183 and 204–232; these read TVSK…TLSK and GGAC…TTAS. The segment covering 214–226 has biased composition (basic and acidic residues); the sequence is DKIHITNETDSKN. N-linked (GlcNAc...) asparagine glycosylation is found at asparagine 220 and asparagine 260. 2 disulfides stabilise this stretch: cysteine 397–cysteine 410 and cysteine 406–cysteine 421. A disordered region spans residues 432 to 454; it reads AEQAATNQETEGKDGKTTNTTGS. Asparagine 450 carries an N-linked (GlcNAc...) asparagine glycan. Serine 454 carries GPI-anchor amidated serine lipidation. Residues 455 to 471 constitute a propeptide, removed in mature form; it reads NSFLINKAPVLLAFLLL.

It localises to the cell membrane. Its function is as follows. VSG forms a coat on the surface of the parasite. The trypanosome evades the immune response of the host by expressing a series of antigenically distinct VSGs from an estimated 1000 VSG genes. This is Variant surface glycoprotein ILTAT 1.1BC from Trypanosoma brucei brucei.